Reading from the N-terminus, the 196-residue chain is CMRF35-like molecule 2 (196 aa).

Positions 1–17 are cleaved as a signal peptide; that stretch reads MRLCAGLLLLCFQGCLS. Residues 18 to 122 enclose the Ig-like V-type domain; that stretch reads LTGPGSVSGY…DSWSRDPSVS (105 aa). The Extracellular segment spans residues 18–171; that stretch reads LTGPGSVSGY…QLWSLLSSIQ (154 aa). Cys36 and Cys104 are disulfide-bonded. N-linked (GlcNAc...) asparagine glycosylation occurs at Asn84. The helical transmembrane segment at 172–192 threads the bilayer; sequence FQVLVFLKLPLFLSMLCAIFW. Over 193-196 the chain is Cytoplasmic; the sequence is VNRL.

This sequence belongs to the CD300 family. As to quaternary structure, interacts with TYROBP.

Its subcellular location is the cell membrane. Probably acts as an activating receptor. In Mus musculus (Mouse), this protein is CMRF35-like molecule 2 (Cd300e).